The primary structure comprises 28 residues: Conotoxin Vi14b (28 aa).

2 disulfide bridges follow: Cys-4-Cys-21 and Cys-7-Cys-18. Residues Lys-15 and Lys-25 each carry the N6-acetyllysine modification.

Post-translationally, the two N6-acetyllysines at position 15 and 25 have been deduced from the mass difference of 42. They are not common in venom proteins. As to expression, expressed by the venom gland.

It is found in the secreted. In terms of biological role, in vitro, inhibits proliferation of the mice ovarian cancer cells ID8. The chain is Conotoxin Vi14b from Conus virgo (Virgin cone).